The sequence spans 119 residues: MAADKQQQQAPVAFNPADPPNIKAANFKDMLPVDVITILNQNIDELDYTKYTEDEISEGLKQLFMGTARTMVSLRQRHLKSLVRRSDMFAQNDASTWARPNIGLKRTFPPRFMQPISED.

It belongs to the herpesviridae small capsomere-interacting protein family. In terms of assembly, interacts with the major capsid protein/MCP.

The protein resides in the virion. It is found in the host nucleus. Participates in the assembly of the infectious particles by decorating the outer surface of the capsid shell and thus forming a layer between the capsid and the tegument. Complexes composed of the major capsid protein and small capsomere-interacting protein/SCP assemble together in the host cytoplasm and are translocated to the nucleus, where they accumulate and participate in capsid assembly. The polypeptide is Small capsomere-interacting protein (Equine herpesvirus 1 (strain V592) (EHV-1)).